The sequence spans 577 residues: Arginine--tRNA ligase (577 aa).

Positions 122–132 (PNVAKEMHVGH) match the 'HIGH' region motif.

The protein belongs to the class-I aminoacyl-tRNA synthetase family. Monomer.

It is found in the cytoplasm. It carries out the reaction tRNA(Arg) + L-arginine + ATP = L-arginyl-tRNA(Arg) + AMP + diphosphate. This chain is Arginine--tRNA ligase, found in Salmonella paratyphi A (strain ATCC 9150 / SARB42).